Consider the following 127-residue polypeptide: Major sperm protein 10/36/56/76 (127 aa).

Residue Ala2 is modified to N-acetylalanine. Positions 9 to 126 constitute an MSP domain; the sequence is DIQTQPNAKI…RRKNLPIEYN (118 aa).

In terms of tissue distribution, sperm.

The protein localises to the cell projection. It is found in the pseudopodium. The protein resides in the cytoplasm. It localises to the cytoskeleton. Its function is as follows. Central component in molecular interactions underlying sperm crawling. Forms an extensive filament system that extends from sperm villipoda, along the leading edge of the pseudopod. This chain is Major sperm protein 10/36/56/76 (msp-10), found in Caenorhabditis elegans.